A 487-amino-acid polypeptide reads, in one-letter code: Neuronal immunoglobulin domain-containing protein rig-3 (487 aa).

An N-terminal signal peptide occupies residues 1–23 (MGRLLAKMLFPLAMCLFVSAVSA). Ig-like domains are found at residues 34 to 139 (PIVI…KTIK) and 247 to 354 (PEFE…PKVT). Disulfide bonds link C61–C124 and C271–C327. The GPI-anchor amidated aspartate moiety is linked to residue D466. Residues 467-487 (SASDSKFPLALATLFFVCLFI) constitute a propeptide, removed in mature form.

In terms of tissue distribution, expressed in the cholinergic motor neurons AS, VA and DA in the ventral nerve cord and in the mechanosensory ALM neurons in the midbody.

The protein localises to the cell projection. Its subcellular location is the axon. It localises to the synapse. The protein resides in the cell membrane. Its function is as follows. Cell surface protein which plays a role in the plasticity of cholinergic synapses at neuromuscular junctions and in the polarity of the mechanosensory neuron ALM, possibly by antagonizing Wnt signaling. This is Neuronal immunoglobulin domain-containing protein rig-3 from Caenorhabditis elegans.